We begin with the raw amino-acid sequence, 525 residues long: GMP synthase [glutamine-hydrolyzing] (525 aa).

Residues 9–207 enclose the Glutamine amidotransferase type-1 domain; sequence RILILDFGSQ…VKEICHCEAL (199 aa). Cys86 functions as the Nucleophile in the catalytic mechanism. Active-site residues include His181 and Glu183. One can recognise a GMPS ATP-PPase domain in the interval 208-400; the sequence is WTPATIIEDA…LGLPYNMLYR (193 aa). 235–241 lines the ATP pocket; the sequence is SGGVDSS.

In terms of assembly, homodimer.

It catalyses the reaction XMP + L-glutamine + ATP + H2O = GMP + L-glutamate + AMP + diphosphate + 2 H(+). Its pathway is purine metabolism; GMP biosynthesis; GMP from XMP (L-Gln route): step 1/1. Its function is as follows. Catalyzes the synthesis of GMP from XMP. This is GMP synthase [glutamine-hydrolyzing] from Tolumonas auensis (strain DSM 9187 / NBRC 110442 / TA 4).